The primary structure comprises 125 residues: ADGGTHDARIALMKKIGGATGALGAIAKGEKPYDAEIVKASLTTIAETAKAFPDQFNPKDSTDAEVNPKIWDNLDDFKAKAAKLSTDAETALAQLPADQAGVGNTLKTLGGNCGACHQAYRIKKD.

Residues Met13, Cys113, Cys116, and His117 each coordinate heme. Positions 13, 113, 116, and 117 each coordinate heme c.

In terms of assembly, monomer. Post-translationally, binds 1 heme c group covalently per subunit.

In terms of biological role, low-spin monoheme cytochrome c. The chain is Cytochrome c-556 from Agrobacterium tumefaciens (strain apple 185).